Consider the following 473-residue polypeptide: Mitochondrial distribution and morphology protein 10 (473 aa).

Belongs to the MDM10 family. As to quaternary structure, component of the ER-mitochondria encounter structure (ERMES) or MDM complex, composed of MMM1, MDM10, MDM12 and MDM34. Associates with the mitochondrial outer membrane sorting assembly machinery SAM(core) complex.

It is found in the mitochondrion outer membrane. Functionally, component of the ERMES/MDM complex, which serves as a molecular tether to connect the endoplasmic reticulum and mitochondria. Components of this complex are involved in the control of mitochondrial shape and protein biogenesis and may function in phospholipid exchange. MDM10 is involved in the late assembly steps of the general translocase of the mitochondrial outer membrane (TOM complex). Functions in the TOM40-specific route of the assembly of outer membrane beta-barrel proteins, including the association of TOM40 with the receptor TOM22 and small TOM proteins. Can associate with the SAM(core) complex as well as the MDM12-MMM1 complex, both involved in late steps of the major beta-barrel assembly pathway, that is responsible for biogenesis of all outer membrane beta-barrel proteins. May act as a switch that shuttles between both complexes and channels precursor proteins into the TOM40-specific pathway. Plays a role in mitochondrial morphology and in the inheritance of mitochondria. This is Mitochondrial distribution and morphology protein 10 from Candida albicans (strain WO-1) (Yeast).